The sequence spans 477 residues: Endogenous retrovirus group V member 1 Env polyprotein (477 aa).

Residues 1 to 21 (MTEKFLFLYLSLLPMPLLSQA) form the signal peptide. Topologically, residues 22–321 (QWNENSLVSF…NTTQPRQKRA (300 aa)) are extracellular. Residue Asn-68 is glycosylated (N-linked (GlcNAc...) asparagine). Residues 322-342 (LGLILAGMGAAIGMIAPWGGF) traverse the membrane as a helical segment. The Cytoplasmic portion of the chain corresponds to 343 to 477 (TYHDVTLRNL…LLSPLWPLSL (135 aa)).

It belongs to the gamma type-C retroviral envelope protein family. In terms of tissue distribution, expressed in placenta.

Its subcellular location is the membrane. This Homo sapiens (Human) protein is Endogenous retrovirus group V member 1 Env polyprotein (ERVV-1).